The primary structure comprises 248 residues: Functional amyloid sbunit FapE (248 aa).

The N-terminal stretch at 1–20 (MNTSRWLTALCLAASMPAYA) is a signal peptide.

Belongs to the FapE family. As to quaternary structure, a minor component of purified amyloid fibrils. Fibrils are resistant to boiling in 2% (weight/vol) SDS and require &gt;90% (vol/vol) formic acid to dissolve.

The protein localises to the fimbrium. Its subcellular location is the secreted. In terms of biological role, a minor component of the functional amyloid in this bacterium. Upon overexpression of the endogenous six-gene locus (fapA-fapF) in situ, cells form large clumps during liquid growth, make large amounts of biofilm and produce amyloid fibrils. Expression of the 6 gene operon in E.coli strain BL21(DE3) induces flocculation and biofilm formation with copious extracellular fibrils. In Pseudomonas fluorescens, this protein is Functional amyloid sbunit FapE.